We begin with the raw amino-acid sequence, 362 residues long: O-methyltransferase 13 (362 aa).

The S-adenosyl-L-homocysteine site is built by Ser-181, Gly-205, Asp-228, Asp-248, and Lys-262. S-adenosyl-L-methionine is bound at residue Asp-228. Catalysis depends on His-266, which acts as the Proton acceptor.

The protein belongs to the class I-like SAM-binding methyltransferase superfamily. Cation-independent O-methyltransferase family. In terms of assembly, homodimer. In terms of tissue distribution, mainly expressed in vascular and cortical tissues.

The catalysed reaction is dopamine + S-adenosyl-L-methionine = 3-methoxytyramine + S-adenosyl-L-homocysteine + H(+). Its pathway is aromatic compound metabolism. The protein operates within alkaloid biosynthesis. O-methyltransferase participating in the biosynthesis of natural products derived from phenylethylamine, including mescaline, a natural hallucinogen potentially used in psychotherapeutic treatments. Catalyzes the O-methylation of dopamine and 4,5-dihydroxy-3-methoxyphenethylamine. The protein is O-methyltransferase 13 of Lophophora williamsii (Peyote).